We begin with the raw amino-acid sequence, 362 residues long: Glucuronokinase 1 (362 aa).

126-136 (PRQTGLSGSSA) is an ATP binding site. The Proton acceptor role is filled by aspartate 179.

The protein belongs to the GHMP kinase family. The cofactor is Mg(2+). It depends on Mn(2+) as a cofactor. Requires Co(2+) as cofactor. Highly expressed in pollen. Detected in seedlings, inflorescences, seeds, leaves and roots.

It carries out the reaction D-glucuronate + ATP = 1-phospho-alpha-D-glucuronate + ADP + H(+). Functionally, sugar-1-kinase with a strict substrate specificity for D-glucuronic acid and ATP. Involved in the biosynthesis of UDP-glucuronic acid (UDP-GlcA), providing nucleotide sugars for cell-wall polymers. May be also involved in a salvage pathway for glucuronic acid. This is Glucuronokinase 1 (GLCAK1) from Arabidopsis thaliana (Mouse-ear cress).